We begin with the raw amino-acid sequence, 189 residues long: Ribonuclease M5 2 (189 aa).

One can recognise a Toprim domain in the interval 8 to 91; the sequence is SQVIVAEGRD…VFLKRDEAVP (84 aa). Mg(2+)-binding residues include glutamate 14, aspartate 60, and aspartate 62.

This sequence belongs to the ribonuclease M5 family. It depends on Mg(2+) as a cofactor.

The protein resides in the cytoplasm. The catalysed reaction is Endonucleolytic cleavage of RNA, removing 21 and 42 nucleotides, respectively, from the 5'- and 3'-termini of a 5S-rRNA precursor.. Functionally, required for correct processing of both the 5' and 3' ends of 5S rRNA precursor. Cleaves both sides of a double-stranded region yielding mature 5S rRNA in one step. In Ligilactobacillus salivarius (strain UCC118) (Lactobacillus salivarius), this protein is Ribonuclease M5 2.